The sequence spans 90 residues: Putative defensin-like protein 168 (90 aa).

The N-terminal stretch at 1-27 (MKYFTLFMISYIFISIFVFSHIHDVEA) is a signal peptide. Intrachain disulfides connect Cys-32–Cys-90, Cys-43–Cys-66, Cys-51–Cys-84, and Cys-64–Cys-86.

The protein belongs to the DEFL family.

The protein resides in the secreted. This chain is Putative defensin-like protein 168, found in Arabidopsis thaliana (Mouse-ear cress).